Here is a 494-residue protein sequence, read N- to C-terminus: Cytochrome P450 2A8 (494 aa).

C439 is a binding site for heme.

The protein belongs to the cytochrome P450 family. Heme is required as a cofactor. Liver.

The protein localises to the endoplasmic reticulum membrane. Its subcellular location is the microsome membrane. The enzyme catalyses an organic molecule + reduced [NADPH--hemoprotein reductase] + O2 = an alcohol + oxidized [NADPH--hemoprotein reductase] + H2O + H(+). Highly active in 7-ethoxycoumarin O-deethylation, and benzphetamine N-demethylation; moderately active in testosterone 7-alpha-hydroxylation, ethylmorphine N-demethylation, p-nitroanisole O-demethylation; and only slightly active in benzopyrene 3-hydroxylation, 7-ethoxyresorufin O-deethylation, testosterone 2-alpha-hydroxylation and testosterone 17-oxidation. Competent in the metabolic activation of aflatoxin B1. The chain is Cytochrome P450 2A8 (CYP2A8) from Mesocricetus auratus (Golden hamster).